A 915-amino-acid polypeptide reads, in one-letter code: Hexokinase HKDC1 (915 aa).

The interval 1–20 (MFAVHLVAFYFTKLKEDQIK) is mitochondrial-binding peptide (MBP). 2 consecutive Hexokinase domains span residues 16–458 (EDQI…MVTA) and 464–903 (QAQR…LITA). ATP contacts are provided by residues R30 and 84–89 (DLGGSK). A hexokinase small subdomain 1 region spans residues 73 to 207 (DGSENGEFLS…DLDVDILALV (135 aa)). Residue 84–91 (DLGGSKFR) participates in D-glucose 6-phosphate binding. D-glucose is bound by residues S155, 172–173 (TK), and 208–209 (ND). The segment at 208 to 447 (NDTVGTMMTC…CDVRFLLSES (240 aa)) is hexokinase large subdomain 1. D-glucose 6-phosphate-binding residues include D209 and T232. D-glucose contacts are provided by residues N235, E260, and 291–294 (QLFE). 413-415 (DGT) provides a ligand contact to D-glucose 6-phosphate. 425 to 426 (KR) contacts ATP. D-glucose 6-phosphate contacts are provided by residues S449 and 532-536 (DLGGT). A hexokinase small subdomain 2 region spans residues 521–652 (DGTEKGKFLA…EFDLDIVAIV (132 aa)). 532-537 (DLGGTN) lines the ATP pocket. D-glucose-binding positions include 600–601 (SF), 617–618 (TK), and 653–654 (ND). The interval 653 to 892 (NDTVGTMMTC…CDVTFMLSED (240 aa)) is hexokinase large subdomain 2. The D-glucose 6-phosphate site is built by D654 and T677. T677 contributes to the ATP binding site. Residues 679 to 680 (SN), E705, and E739 contribute to the D-glucose site. Residues 744–745 (GM), 781–785 (TKFLS), and 860–864 (TLYKL) contribute to the ATP site. Residues 858–860 (DGT) and S894 each bind D-glucose 6-phosphate.

It belongs to the hexokinase family. In terms of tissue distribution, widely expressed. Detected in retina, brain, cerebellum, liver, lung, kidney, spleen, pancreas and intestine.

It is found in the cytoplasm. It localises to the mitochondrion membrane. Its subcellular location is the photoreceptor inner segment. It carries out the reaction a D-hexose + ATP = a D-hexose 6-phosphate + ADP + H(+). The enzyme catalyses D-glucose + ATP = D-glucose 6-phosphate + ADP + H(+). Its pathway is carbohydrate metabolism; hexose metabolism. It participates in carbohydrate degradation; glycolysis; D-glyceraldehyde 3-phosphate and glycerone phosphate from D-glucose: step 1/4. Its function is as follows. Catalyzes the phosphorylation of hexose to hexose 6-phosphate, although at very low level compared to other hexokinases. Has low glucose phosphorylating activity compared to other hexokinases. Involved in glucose homeostasis and hepatic lipid accumulation. Required to maintain whole-body glucose homeostasis during pregnancy; however additional evidences are required to confirm this role. The chain is Hexokinase HKDC1 from Mus musculus (Mouse).